The primary structure comprises 577 residues: Endopolyphosphatase (577 aa).

At 1-2 (MR) the chain is on the cytoplasmic side. The helical; Signal-anchor for type II membrane protein transmembrane segment at 3-23 (PSVITVAVLFVQSTWASFAFG) threads the bilayer. Over 24-577 (NPMSMRNKAH…YIGSISDFED (554 aa)) the chain is Vacuolar. Asn-363, Asn-370, Asn-375, and Asn-399 each carry an N-linked (GlcNAc...) asparagine glycan. The disordered stretch occupies residues 430 to 460 (SDYEIDKKKKKKKKNNKKKKKNKRKNIKPGP). Positions 437–456 (KKKKKKKNNKKKKKNKRKNI) are enriched in basic residues. An N-linked (GlcNAc...) asparagine glycan is attached at Asn-481.

This sequence belongs to the endopolyphosphatase PPN1 family. Requires a divalent metal cation as cofactor. In terms of processing, processing by proteases in the vacuole may be required for activation.

Its subcellular location is the vacuole membrane. It catalyses the reaction [phosphate](n+1) + n H2O = (n+1) phosphate + n H(+). Functionally, catalyzes the hydrolysis of inorganic polyphosphate (polyP) chains of many hundreds of phosphate residues into shorter lengths. In Schizosaccharomyces pombe (strain 972 / ATCC 24843) (Fission yeast), this protein is Endopolyphosphatase (ppn1).